The chain runs to 166 residues: Crossover junction endodeoxyribonuclease RuvC (166 aa).

Active-site residues include aspartate 7, glutamate 67, and aspartate 139. Residues aspartate 7, glutamate 67, and aspartate 139 each coordinate Mg(2+).

This sequence belongs to the RuvC family. As to quaternary structure, homodimer which binds Holliday junction (HJ) DNA. The HJ becomes 2-fold symmetrical on binding to RuvC with unstacked arms; it has a different conformation from HJ DNA in complex with RuvA. In the full resolvosome a probable DNA-RuvA(4)-RuvB(12)-RuvC(2) complex forms which resolves the HJ. Mg(2+) serves as cofactor.

The protein localises to the cytoplasm. The enzyme catalyses Endonucleolytic cleavage at a junction such as a reciprocal single-stranded crossover between two homologous DNA duplexes (Holliday junction).. Functionally, the RuvA-RuvB-RuvC complex processes Holliday junction (HJ) DNA during genetic recombination and DNA repair. Endonuclease that resolves HJ intermediates. Cleaves cruciform DNA by making single-stranded nicks across the HJ at symmetrical positions within the homologous arms, yielding a 5'-phosphate and a 3'-hydroxyl group; requires a central core of homology in the junction. The consensus cleavage sequence is 5'-(A/T)TT(C/G)-3'. Cleavage occurs on the 3'-side of the TT dinucleotide at the point of strand exchange. HJ branch migration catalyzed by RuvA-RuvB allows RuvC to scan DNA until it finds its consensus sequence, where it cleaves and resolves the cruciform DNA. In Paramagnetospirillum magneticum (strain ATCC 700264 / AMB-1) (Magnetospirillum magneticum), this protein is Crossover junction endodeoxyribonuclease RuvC.